The primary structure comprises 155 residues: Ribosomal RNA large subunit methyltransferase H (155 aa).

S-adenosyl-L-methionine-binding positions include Leu-72, Gly-103, and 122-127; that span reads FGRMVW.

It belongs to the RNA methyltransferase RlmH family. In terms of assembly, homodimer.

It localises to the cytoplasm. The enzyme catalyses pseudouridine(1915) in 23S rRNA + S-adenosyl-L-methionine = N(3)-methylpseudouridine(1915) in 23S rRNA + S-adenosyl-L-homocysteine + H(+). Functionally, specifically methylates the pseudouridine at position 1915 (m3Psi1915) in 23S rRNA. In Cereibacter sphaeroides (strain ATCC 17023 / DSM 158 / JCM 6121 / CCUG 31486 / LMG 2827 / NBRC 12203 / NCIMB 8253 / ATH 2.4.1.) (Rhodobacter sphaeroides), this protein is Ribosomal RNA large subunit methyltransferase H.